The following is a 90-amino-acid chain: Cell division protein CrgA (90 aa).

The interval 1–26 (MPKAKVTKNSIAPVSSNPSANRTPVK) is disordered. Residues 7–26 (TKNSIAPVSSNPSANRTPVK) show a composition bias toward polar residues. Transmembrane regions (helical) follow at residues 38 to 58 (VIMF…YLVG) and 69 to 89 (AWNY…TMGW).

It belongs to the CrgA family.

Its subcellular location is the cell membrane. In terms of biological role, involved in cell division. The polypeptide is Cell division protein CrgA (Corynebacterium efficiens (strain DSM 44549 / YS-314 / AJ 12310 / JCM 11189 / NBRC 100395)).